The sequence spans 253 residues: Phycocyanobilin:ferredoxin oxidoreductase (253 aa).

It belongs to the HY2 family.

The enzyme catalyses (2R,3Z)-phycocyanobilin + 4 oxidized [2Fe-2S]-[ferredoxin] = biliverdin IXalpha + 4 reduced [2Fe-2S]-[ferredoxin] + 4 H(+). Catalyzes the four-electron reduction of biliverdin IX-alpha (2-electron reduction at both the A and D rings); the reaction proceeds via an isolatable 2-electron intermediate, 181,182-dihydrobiliverdin. The protein is Phycocyanobilin:ferredoxin oxidoreductase (pcyA) of Gloeobacter violaceus (strain ATCC 29082 / PCC 7421).